The primary structure comprises 226 residues: HTH-type transcriptional regulator TcmR (226 aa).

Positions 1–16 (MDSAETDTPSTRSTPN) are enriched in polar residues. Positions 1-25 (MDSAETDTPSTRSTPNGPGLRQRKL) are disordered. The 61-residue stretch at 26 to 86 (RRTRDQLIRE…TPISAIDEAF (61 aa)) folds into the HTH tetR-type domain. Residues 49-68 (TVEQIAEAVEVHPRTFFRHF) constitute a DNA-binding region (H-T-H motif).

The protein operates within antibiotic biosynthesis; tetracenomycin C biosynthesis. Represses transcription of the divergently oriented tcmR and tcmA (tetracenomycin C resistance and export) genes by binding to an intergenic operator region. This binding is inhibited by tetracenomycin C. The sequence is that of HTH-type transcriptional regulator TcmR (tcmR) from Streptomyces glaucescens.